The sequence spans 463 residues: Putative ankyrin repeat protein R579 (463 aa).

ANK repeat units lie at residues 124 to 154 (LKTD…KCTI), 156 to 181 (SITR…SENI), 242 to 271 (KEKN…QFNP), 273 to 299 (IYLW…DYRP), 300 to 328 (HIDR…VSQE), 329 to 355 (NINE…MGAD), 356 to 385 (INYK…DITT), and 387 to 416 (GSND…TITL).

In Acanthamoeba polyphaga (Amoeba), this protein is Putative ankyrin repeat protein R579.